The primary structure comprises 643 residues: Probable extracellular metalloproteinase 4 (643 aa).

The N-terminal stretch at 1 to 18 (MHGLLLAGLLALPLNVFA) is a signal peptide. Residues 19–254 (HPTESHSSGV…VHSVVDYVSA (236 aa)) constitute a propeptide that is removed on maturation. Residues 49–69 (SDAVPKQDGESFTTSSTGDDN) form a disordered region. Over residues 58–69 (ESFTTSSTGDDN) the composition is skewed to polar residues. N-linked (GlcNAc...) asparagine glycosylation is found at Asn271 and Asn420. His437 lines the Zn(2+) pocket. Glu438 is an active-site residue. His441 contributes to the Zn(2+) binding site. 2 N-linked (GlcNAc...) asparagine glycosylation sites follow: Asn603 and Asn629.

The protein belongs to the peptidase M36 family. Zn(2+) serves as cofactor.

It localises to the secreted. Its function is as follows. Secreted metalloproteinase probably acting as a virulence factor. The chain is Probable extracellular metalloproteinase 4 (MEP4) from Trichophyton verrucosum (strain HKI 0517).